A 149-amino-acid chain; its full sequence is D-aminoacyl-tRNA deacylase (149 aa).

Positions 137–138 (GP) match the Gly-cisPro motif, important for rejection of L-amino acids motif.

This sequence belongs to the DTD family. Homodimer.

Its subcellular location is the cytoplasm. It catalyses the reaction glycyl-tRNA(Ala) + H2O = tRNA(Ala) + glycine + H(+). It carries out the reaction a D-aminoacyl-tRNA + H2O = a tRNA + a D-alpha-amino acid + H(+). Functionally, an aminoacyl-tRNA editing enzyme that deacylates mischarged D-aminoacyl-tRNAs. Also deacylates mischarged glycyl-tRNA(Ala), protecting cells against glycine mischarging by AlaRS. Acts via tRNA-based rather than protein-based catalysis; rejects L-amino acids rather than detecting D-amino acids in the active site. By recycling D-aminoacyl-tRNA to D-amino acids and free tRNA molecules, this enzyme counteracts the toxicity associated with the formation of D-aminoacyl-tRNA entities in vivo and helps enforce protein L-homochirality. The polypeptide is D-aminoacyl-tRNA deacylase (Caldicellulosiruptor bescii (strain ATCC BAA-1888 / DSM 6725 / KCTC 15123 / Z-1320) (Anaerocellum thermophilum)).